The following is a 652-amino-acid chain: Potassium voltage-gated channel subfamily KQT member 1 (652 aa).

Residues 1-110 (MSSEQPAWTF…YNFLERPTGW (110 aa)) are Cytoplasmic-facing. Residues 111–132 (KCFVYHFTVFLIVLICLIFSVL) traverse the membrane as a helical segment. Residues 133–143 (STIQQYNNLAT) lie on the Extracellular side of the membrane. A helical transmembrane segment spans residues 144-166 (ETLFWMEIVLVVFFGAEYVVRLW). Residues 167-182 (SAGCRSKYVGVWGRLR) are Cytoplasmic-facing. Residues 183–208 (FARKPISVIDLIVVVASVIVLCVGSN) form a helical membrane-spanning segment. Over 209–216 (GQVFATSA) the chain is Extracellular. The chain crosses the membrane as a helical; Voltage-sensor span at residues 217 to 232 (IRGIRFLQILRMLHVD). Residues 228–236 (MLHVDRQGG) are interaction with KCNE3. Topologically, residues 233-250 (RQGGTWRLLGSVVFIHRQ) are cytoplasmic. Glutamine 234 contributes to the a 1,2-diacyl-sn-glycero-3-phospho-(1D-myo-inositol-4,5-bisphosphate) binding site. The helical transmembrane segment at 251-273 (ELITTLYIGFLGLIFSSYFVYLA) threads the bilayer. Residues 274–289 (EKDAIDSSGEYQFGSY) are Extracellular-facing. Residues 290–310 (ADALWWGVVTVTTIGYGDKVP) constitute an intramembrane region (pore-forming). Residues 311-312 (QT) are Extracellular-facing. The helical transmembrane segment at 313 to 338 (WIGKTIASCFSVFAISFFALPAGILG) threads the bilayer. The Cytoplasmic portion of the chain corresponds to 339–652 (SGFALKVQQK…VPRMTQDNIS (314 aa)). The tract at residues 360–372 (AAASLIQTAWRCY) is interaction with CALM. Residues 393–419 (HHLMSPSPKPKKSAMVKKKKIRTERDE) are disordered. Residues 401–414 (KPKKSAMVKKKKIR) show a composition bias toward basic residues. The segment at 504-518 (KVIRRMQYFVAKKKF) is interaction with CALM; calcium-dependent. Residues 524 to 561 (PYDVRDVIEQYSQGHLNLMVRIKELQRRLDQSLGKPSL) are interaction with KCNE1 C-terminus. Residues 577 to 605 (IGSRLNRVEDKVTQMDHKLNLITDMLHHL) are interaction with AKAP9. The C-terminal assembly domain (tetramerization) stretch occupies residues 578-609 (GSRLNRVEDKVTQMDHKLNLITDMLHHLLTNQ). The disordered stretch occupies residues 609–652 (QQGSQSIRTPHRSNSLNSENHPSRNTLPTYEQLNVPRMTQDNIS).

The protein belongs to the potassium channel family. KQT (TC 1.A.1.15) subfamily. Kv7.1/KCNQ1 sub-subfamily. As to quaternary structure, tetramer. Heterotetramer with KCNE1; targets to the membrane raft. Interacts (via C-terminus) with CALM; forms a heterotetramer in a calcium-independent manner. Interacts with KCNE2; form a heterooligomer complex that targets to the membrane raft and leading to currents with an apparently instantaneous activation, a rapid deactivation process and a linear current-voltage relationship and decreases the amplitude of the outward current. Interacts with KCNE3; four KCNE3 molecules are bound to one KCNQ1 tetramer (4:4 KCNQ1:KCNE3 stoichiometry); alters membrane raft localization; affects KCNQ1 structure and gating properties. Interacts with KCNE4; impairs KCNQ1 localization in lipid rafts and inhibits voltage-gated potassium channel activity. Interacts with KCNE5; impairs KCNQ1 localization in lipid rafts and only conducts current upon strong and continued depolarization.

It is found in the cell membrane. The protein localises to the cytoplasmic vesicle membrane. It localises to the membrane raft. The protein resides in the endoplasmic reticulum. Its subcellular location is the basolateral cell membrane. It catalyses the reaction K(+)(in) = K(+)(out). Its activity is regulated as follows. PIP2 molecule is essential to activate KCNQ channels by inducing the coupling of the voltage-sensing domain (VSD) and the pore-forming domain (PD). Upon channel activation, PIP2 disrupts the VSD-calmodulin/CALM interactions, causing the release of CALM from the VSD which triggers the opening of the gate. Calcium potentiates KCNQ1 channel current through calcium-bound CALM. Calcium-bound CALM competes with PIP2 to stabilize the channel open state. In terms of biological role, pore-forming subunit of the voltage-gated potassium (Kv) channel involved in the regulation of cardiomyocyte excitability and important in normal development and functions of myocardium, inner ear, stomach and colon. Associates with KCNE beta subunits that modulates current kinetics. Induces a voltage-dependent by rapidly activating and slowly deactivating potassium-selective outward current. Also promotes a delayed voltage activated potassium current showing outward rectification characteristic. During beta-adrenergic receptor stimulation participates in cardiac repolarization by associating with KCNE1 to form the I(Ks) cardiac potassium current that increases the amplitude and slows down the activation kinetics of outward potassium current I(Ks). When associated with KCNE3, forms the potassium channel that is important for cyclic AMP-stimulated intestinal secretion of chloride ions. When associated with KCNE2, forms a heterooligomer complex leading to currents with an apparently instantaneous activation, a rapid deactivation process and a linear current-voltage relationship and decreases the amplitude of the outward current. When associated with KCNE4, inhibits voltage-gated potassium channel activity. When associated with KCNE5, this complex only conducts current upon strong and continued depolarization. The chain is Potassium voltage-gated channel subfamily KQT member 1 from Xenopus laevis (African clawed frog).